Here is a 118-residue protein sequence, read N- to C-terminus: Immunoglobulin heavy variable 4-30-2 (118 aa).

Residues 1-19 form the signal peptide; it reads MKHLWFFLLLVAAPRWVLS. Residues 20-44 are framework-1; sequence QLQLQESGSGLVKPSQTLSLTCAVS. Residues 20-118 form the Ig-like domain; it reads QLQLQESGSG…ADTAVYYCAR (99 aa). A disulfide bond links Cys41 and Cys116. The tract at residues 45–54 is complementarity-determining-1; it reads GGSISSGGYS. Positions 55–71 are framework-2; sequence WSWIRQPPGKGLEWIGY. The tract at residues 72–78 is complementarity-determining-2; that stretch reads IYHSGST. Positions 79-116 are framework-3; the sequence is YYNPSLKSRVTISVDRSKNQFSLKLSSVTAADTAVYYC. The complementarity-determining-3 stretch occupies residues 117 to 118; sequence AR.

As to quaternary structure, immunoglobulins are composed of two identical heavy chains and two identical light chains; disulfide-linked.

It localises to the secreted. The protein resides in the cell membrane. Functionally, v region of the variable domain of immunoglobulin heavy chains that participates in the antigen recognition. Immunoglobulins, also known as antibodies, are membrane-bound or secreted glycoproteins produced by B lymphocytes. In the recognition phase of humoral immunity, the membrane-bound immunoglobulins serve as receptors which, upon binding of a specific antigen, trigger the clonal expansion and differentiation of B lymphocytes into immunoglobulins-secreting plasma cells. Secreted immunoglobulins mediate the effector phase of humoral immunity, which results in the elimination of bound antigens. The antigen binding site is formed by the variable domain of one heavy chain, together with that of its associated light chain. Thus, each immunoglobulin has two antigen binding sites with remarkable affinity for a particular antigen. The variable domains are assembled by a process called V-(D)-J rearrangement and can then be subjected to somatic hypermutations which, after exposure to antigen and selection, allow affinity maturation for a particular antigen. The protein is Immunoglobulin heavy variable 4-30-2 of Homo sapiens (Human).